We begin with the raw amino-acid sequence, 334 residues long: NH(3)-dependent NAD(+) synthetase (334 aa).

47-54 (GLSGGIDS) is an ATP binding site. Asp-53 lines the Mg(2+) pocket. Arg-183 contributes to the deamido-NAD(+) binding site. Thr-203 lines the ATP pocket. Glu-208 lines the Mg(2+) pocket. Deamido-NAD(+) contacts are provided by Lys-216 and Asp-223. Lys-232 and Thr-254 together coordinate ATP.

It belongs to the NAD synthetase family. Homodimer.

The catalysed reaction is deamido-NAD(+) + NH4(+) + ATP = AMP + diphosphate + NAD(+) + H(+). Its pathway is cofactor biosynthesis; NAD(+) biosynthesis; NAD(+) from deamido-NAD(+) (ammonia route): step 1/1. Its function is as follows. Catalyzes the ATP-dependent amidation of deamido-NAD to form NAD. Uses ammonia as a nitrogen source. In Rhizobium meliloti (strain 1021) (Ensifer meliloti), this protein is NH(3)-dependent NAD(+) synthetase.